The chain runs to 320 residues: Bifunctional protein FolD 2 (320 aa).

NADP(+) is bound by residues 173 to 175 and isoleucine 242; that span reads GRS.

Belongs to the tetrahydrofolate dehydrogenase/cyclohydrolase family. In terms of assembly, homodimer.

The enzyme catalyses (6R)-5,10-methylene-5,6,7,8-tetrahydrofolate + NADP(+) = (6R)-5,10-methenyltetrahydrofolate + NADPH. The catalysed reaction is (6R)-5,10-methenyltetrahydrofolate + H2O = (6R)-10-formyltetrahydrofolate + H(+). It functions in the pathway one-carbon metabolism; tetrahydrofolate interconversion. Catalyzes the oxidation of 5,10-methylenetetrahydrofolate to 5,10-methenyltetrahydrofolate and then the hydrolysis of 5,10-methenyltetrahydrofolate to 10-formyltetrahydrofolate. The polypeptide is Bifunctional protein FolD 2 (Rubrobacter xylanophilus (strain DSM 9941 / JCM 11954 / NBRC 16129 / PRD-1)).